A 148-amino-acid chain; its full sequence is Putative pre-16S rRNA nuclease (148 aa).

Belongs to the YqgF nuclease family.

Its subcellular location is the cytoplasm. In terms of biological role, could be a nuclease involved in processing of the 5'-end of pre-16S rRNA. This Colwellia psychrerythraea (strain 34H / ATCC BAA-681) (Vibrio psychroerythus) protein is Putative pre-16S rRNA nuclease.